A 560-amino-acid polypeptide reads, in one-letter code: Nucleoprotein (560 aa).

Residues 54 to 236 (LRKAKRSDAD…ITRDESAVNI (183 aa)) form a binding site for the cap structure m7GTP region. The span at 323 to 332 (GRSWDNTSVD) shows a compositional bias: polar residues. A disordered region spans residues 323 to 349 (GRSWDNTSVDLNPKPDPGPRAPEKNGQ). The Mn(2+) site is built by aspartate 380 and glutamate 382. Zn(2+) contacts are provided by glutamate 390, cysteine 497, histidine 500, and cysteine 521. A Mn(2+)-binding site is contributed by aspartate 525.

It belongs to the arenaviridae nucleocapsid protein family. Homomultimerizes to form the nucleocapsid. Binds to viral genomic RNA. Interacts with glycoprotein G2. Interacts with protein Z; this interaction probably directs the encapsidated genome to budding sites. Interacts with protein L; this interaction does not interfere with Z-L interaction. Interacts with host IKBKE (via Protein kinase domain); the interaction inhibits IKBKE kinase activity.

The protein resides in the virion. Its subcellular location is the host cytoplasm. Its function is as follows. Encapsidates the genome, protecting it from nucleases. The encapsidated genomic RNA is termed the nucleocapsid (NC). Serves as template for viral transcription and replication. The increased presence of protein N in host cell does not seem to trigger the switch from transcription to replication as observed in other negative strain RNA viruses. Through the interaction with host IKBKE, strongly inhibits the phosphorylation and nuclear translocation of host IRF3, a protein involved in interferon activation pathway, leading to the inhibition of interferon-beta and IRF3-dependent promoters activation. Also encodes a functional 3'-5' exoribonuclease that degrades preferentially dsRNA substrates and thereby participates in the suppression of interferon induction. This Cupixi mammarenavirus (isolate Rat/Brasil/BeAn 119303/1970) (CPXV) protein is Nucleoprotein.